Consider the following 396-residue polypeptide: Phosphoglycerate kinase (396 aa).

Substrate-binding positions include 22-24 (DFN), R37, 60-63 (HFGR), R118, and R151. ATP is bound by residues K201, E322, and 352 to 355 (GGDS).

Belongs to the phosphoglycerate kinase family. In terms of assembly, monomer.

Its subcellular location is the cytoplasm. The catalysed reaction is (2R)-3-phosphoglycerate + ATP = (2R)-3-phospho-glyceroyl phosphate + ADP. Its pathway is carbohydrate degradation; glycolysis; pyruvate from D-glyceraldehyde 3-phosphate: step 2/5. This chain is Phosphoglycerate kinase, found in Wolbachia pipientis subsp. Culex pipiens (strain wPip).